Reading from the N-terminus, the 90-residue chain is U-scoloptoxin(15)-Sa3a (90 aa).

Positions 1–18 (MKMVYLGLFLIITSCVIS) are cleaved as a signal peptide.

The protein belongs to the scoloptoxin-15 family. In terms of processing, contains 3 disulfide bonds. In terms of tissue distribution, expressed by the venom gland.

Its subcellular location is the secreted. This chain is U-scoloptoxin(15)-Sa3a, found in Scolopendra alternans (Florida Keys giant centipede).